The sequence spans 63 residues: uncharacterized protein (63 aa).

Residues 35-63 (PKPDSLISEHPTAQEAMDAKKRYEDPDKE) form a disordered region. Residues 51 to 63 (MDAKKRYEDPDKE) are compositionally biased toward basic and acidic residues.

This is an uncharacterized protein from Escherichia coli O157:H7.